Reading from the N-terminus, the 241-residue chain is 15,16-dihydrobiliverdin:ferredoxin oxidoreductase (241 aa).

The disordered stretch occupies residues 16-35 (RGGQPAAVPEGLEHCHSSKS).

The protein belongs to the HY2 family.

It carries out the reaction 15,16-dihydrobiliverdin + oxidized 2[4Fe-4S]-[ferredoxin] = biliverdin IXalpha + reduced 2[4Fe-4S]-[ferredoxin] + 2 H(+). Functionally, catalyzes the two-electron reduction of biliverdin IX-alpha at the C15 methine bridge. This is 15,16-dihydrobiliverdin:ferredoxin oxidoreductase from Synechococcus sp. (strain WH7803).